An 85-amino-acid polypeptide reads, in one-letter code: Putative plasmid stability protein y4jJ (85 aa).

Over residues 66–78 (EAEHFNQLRDKTP) the composition is skewed to basic and acidic residues. Positions 66-85 (EAEHFNQLRDKTPAEPMSFE) are disordered.

The protein to P.syringae pv tomato plasmid stability protein StbC.

Involved in plasmid stability. This is Putative plasmid stability protein y4jJ from Sinorhizobium fredii (strain NBRC 101917 / NGR234).